A 902-amino-acid polypeptide reads, in one-letter code: Translation initiation factor IF-2 (902 aa).

2 stretches are compositionally biased toward basic and acidic residues: residues 1–12 (MVDTKTPGDKKL) and 43–60 (VVEK…EPHA). The disordered stretch occupies residues 1–276 (MVDTKTPGDK…KPGPQKERGR (276 aa)). The span at 69–84 (PAAPAPSRPAPPPAPP) shows a compositional bias: pro residues. A compositionally biased stretch (basic and acidic residues) spans 111 to 174 (AKLREVEERR…ETEAKKRFGE (64 aa)). 2 stretches are compositionally biased toward low complexity: residues 181–190 (AARPATAAPA) and 198–237 (APAA…AVAA). In terms of domain architecture, tr-type G spans 398-567 (TRSPVVTVMG…MIALQADILD (170 aa)). A G1 region spans residues 407–414 (GHVDHGKT). Residue 407–414 (GHVDHGKT) coordinates GTP. Residues 432-436 (GITQH) form a G2 region. The segment at 455–458 (DTPG) is G3. Residues 455-459 (DTPGH) and 509-512 (NKID) contribute to the GTP site. The interval 509-512 (NKID) is G4. Residues 545–547 (SAK) are G5.

It belongs to the TRAFAC class translation factor GTPase superfamily. Classic translation factor GTPase family. IF-2 subfamily.

The protein localises to the cytoplasm. Functionally, one of the essential components for the initiation of protein synthesis. Protects formylmethionyl-tRNA from spontaneous hydrolysis and promotes its binding to the 30S ribosomal subunits. Also involved in the hydrolysis of GTP during the formation of the 70S ribosomal complex. This is Translation initiation factor IF-2 from Bradyrhizobium diazoefficiens (strain JCM 10833 / BCRC 13528 / IAM 13628 / NBRC 14792 / USDA 110).